Reading from the N-terminus, the 978-residue chain is Glycine dehydrogenase (decarboxylating) (978 aa).

The residue at position 726 (Lys-726) is an N6-(pyridoxal phosphate)lysine.

Belongs to the GcvP family. As to quaternary structure, the glycine cleavage system is composed of four proteins: P, T, L and H. Requires pyridoxal 5'-phosphate as cofactor.

The catalysed reaction is N(6)-[(R)-lipoyl]-L-lysyl-[glycine-cleavage complex H protein] + glycine + H(+) = N(6)-[(R)-S(8)-aminomethyldihydrolipoyl]-L-lysyl-[glycine-cleavage complex H protein] + CO2. In terms of biological role, the glycine cleavage system catalyzes the degradation of glycine. The P protein binds the alpha-amino group of glycine through its pyridoxal phosphate cofactor; CO(2) is released and the remaining methylamine moiety is then transferred to the lipoamide cofactor of the H protein. The sequence is that of Glycine dehydrogenase (decarboxylating) from Paraburkholderia phytofirmans (strain DSM 17436 / LMG 22146 / PsJN) (Burkholderia phytofirmans).